Here is a 155-residue protein sequence, read N- to C-terminus: Protein FAM162A (155 aa).

The tract at residues 77–103 (RFKKEEEIPETISFEMLDAAKNKIRVK) is required for proapoptotic activity. The helical transmembrane segment at 102–121 (VKVSYLMIALTVAGCVYMVI) threads the bilayer.

It belongs to the UPF0389 family. In terms of assembly, interacts with HSP90AB1; HSP90AB1 is essential for FAM162A mitochondrial localization and pro-apoptotic activity. Interacts with VDAC2; the interaction is probably involved in inducing mitochondrial permeability transition.

The protein resides in the mitochondrion membrane. Functionally, proposed to be involved in regulation of apoptosis; the exact mechanism may differ between cell types/tissues. May be involved in hypoxia-induced cell death of transformed cells implicating cytochrome C release and caspase activation (such as CASP9) and inducing mitochondrial permeability transition. May be involved in hypoxia-induced cell death of neuronal cells probably by promoting release of AIFM1 from mitochondria to cytoplasm and its translocation to the nucleus; however, the involvement of caspases has been reported conflictingly. The chain is Protein FAM162A (Fam162a) from Rattus norvegicus (Rat).